We begin with the raw amino-acid sequence, 129 residues long: Small ribosomal subunit protein uS11 (129 aa).

The protein belongs to the universal ribosomal protein uS11 family. In terms of assembly, part of the 30S ribosomal subunit. Interacts with proteins S7 and S18. Binds to IF-3.

Its function is as follows. Located on the platform of the 30S subunit, it bridges several disparate RNA helices of the 16S rRNA. Forms part of the Shine-Dalgarno cleft in the 70S ribosome. This chain is Small ribosomal subunit protein uS11, found in Cereibacter sphaeroides (strain ATCC 17029 / ATH 2.4.9) (Rhodobacter sphaeroides).